Reading from the N-terminus, the 156-residue chain is Small ribosomal subunit protein uS7c (156 aa).

This sequence belongs to the universal ribosomal protein uS7 family. Part of the 30S ribosomal subunit.

It is found in the plastid. The protein resides in the chloroplast. One of the primary rRNA binding proteins, it binds directly to 16S rRNA where it nucleates assembly of the head domain of the 30S subunit. The chain is Small ribosomal subunit protein uS7c (rps7) from Gracilaria tenuistipitata var. liui (Red alga).